Reading from the N-terminus, the 371-residue chain is tRNA (guanine(26)-N(2))-dimethyltransferase (371 aa).

Positions valine 4–valine 368 constitute a Trm1 methyltransferase domain. Arginine 41, arginine 66, aspartate 82, aspartate 108, and alanine 109 together coordinate S-adenosyl-L-methionine. Positions 237, 240, 256, and 259 each coordinate Zn(2+).

The protein belongs to the class I-like SAM-binding methyltransferase superfamily. Trm1 family.

It catalyses the reaction guanosine(26) in tRNA + 2 S-adenosyl-L-methionine = N(2)-dimethylguanosine(26) in tRNA + 2 S-adenosyl-L-homocysteine + 2 H(+). Dimethylates a single guanine residue at position 26 of a number of tRNAs using S-adenosyl-L-methionine as donor of the methyl groups. The sequence is that of tRNA (guanine(26)-N(2))-dimethyltransferase from Methanoculleus marisnigri (strain ATCC 35101 / DSM 1498 / JR1).